A 1859-amino-acid polypeptide reads, in one-letter code: U3 small nucleolar RNA-associated protein 10 (1859 aa).

Residues 258–278 (LGAYSVLAVLSAVAPLSIELL) traverse the membrane as a helical segment. The stretch at 578–616 (VLPLLLIAFNDPSSHIRAAFAQLVQLVSEITKAIHENKK) is one HEAT 1 repeat. A helical membrane pass occupies residues 1392–1412 (IVIASISAIVSIVNVLGIKTL). An HEAT 2 repeat occupies 1819-1857 (LVPHIAELLEDDDEAVEIEVREGLVRVIEKVLGEPLDRY).

Belongs to the HEATR1/UTP10 family. As to quaternary structure, component of the ribosomal small subunit (SSU) processome.

The protein localises to the nucleus. It localises to the nucleolus. It is found in the membrane. Involved in nucleolar processing of pre-18S ribosomal RNA. Involved in ribosome biosynthesis. This Lodderomyces elongisporus (strain ATCC 11503 / CBS 2605 / JCM 1781 / NBRC 1676 / NRRL YB-4239) (Yeast) protein is U3 small nucleolar RNA-associated protein 10.